A 776-amino-acid chain; its full sequence is Transcription factor MYB3R-1 (776 aa).

The disordered stretch occupies residues 1–41 (MKREMKAPTTPLESLQGDLKGKQGRTSGPARRSTKGQWTPE). 3 consecutive HTH myb-type domains span residues 30-81 (ARRS…QKVL), 82-137 (NPEL…NPGI), and 138-188 (NKNA…KKKL). DNA-binding regions (H-T-H motif) lie at residues 58–81 (WKKI…QKVL), 110–133 (WSTI…HNHL), and 161–184 (WAEL…NSSV). Disordered stretches follow at residues 217–253 (SSWM…STND), 364–384 (FQSS…TDPE), and 401–435 (DNMK…AETH). 3 stretches are compositionally biased toward polar residues: residues 240 to 253 (CSQA…STND), 364 to 380 (FQSS…SNSD), and 423 to 432 (GKGSLCSQAA). The short motif at 648–655 (KKRHRDLL) is the Nuclear localization signal element.

In terms of assembly, component of a DREAM-like complex which modulates a variety of developmentally regulated genes and of the mitotic genes in proliferating and differentiated cells. As to expression, expressed ubiquitously at low levels. Expressed in roots, cotyledons, flowers and leaves, especially in vascular tissues.

It localises to the nucleus. Its function is as follows. Transcription factor that binds 5'-AACGG-3' motifs in gene promoters. Transcription activator involved in the regulation of cytokinesis, probably via the activation of several G2/M phase-specific genes transcription (e.g. KNOLLE). Transcription repressor that regulates organ growth. Binds to the promoters of G2/M-specific genes and to E2F target genes to prevent their expression in post-mitotic cells and to restrict the time window of their expression in proliferating cells. Required for the maintenance of diploidy. In Arabidopsis thaliana (Mouse-ear cress), this protein is Transcription factor MYB3R-1.